Reading from the N-terminus, the 415-residue chain is Histidine--tRNA ligase (415 aa).

It belongs to the class-II aminoacyl-tRNA synthetase family. As to quaternary structure, homodimer.

Its subcellular location is the cytoplasm. It carries out the reaction tRNA(His) + L-histidine + ATP = L-histidyl-tRNA(His) + AMP + diphosphate + H(+). The chain is Histidine--tRNA ligase from Clostridium botulinum (strain 657 / Type Ba4).